We begin with the raw amino-acid sequence, 405 residues long: Glucose-1-phosphate adenylyltransferase 1 (405 aa).

Alpha-D-glucose 1-phosphate is bound by residues Y96, G161, 176–177, and S194; that span reads EK.

Belongs to the bacterial/plant glucose-1-phosphate adenylyltransferase family. Homotetramer.

It carries out the reaction alpha-D-glucose 1-phosphate + ATP + H(+) = ADP-alpha-D-glucose + diphosphate. It participates in glycan biosynthesis; glycogen biosynthesis. Involved in the biosynthesis of ADP-glucose, a building block required for the elongation reactions to produce glycogen. Catalyzes the reaction between ATP and alpha-D-glucose 1-phosphate (G1P) to produce pyrophosphate and ADP-Glc. The sequence is that of Glucose-1-phosphate adenylyltransferase 1 from Vibrio vulnificus (strain CMCP6).